We begin with the raw amino-acid sequence, 231 residues long: ATP phosphoribosyltransferase (231 aa).

The protein belongs to the ATP phosphoribosyltransferase family. Short subfamily. In terms of assembly, heteromultimer composed of HisG and HisZ subunits.

It is found in the cytoplasm. It catalyses the reaction 1-(5-phospho-beta-D-ribosyl)-ATP + diphosphate = 5-phospho-alpha-D-ribose 1-diphosphate + ATP. It functions in the pathway amino-acid biosynthesis; L-histidine biosynthesis; L-histidine from 5-phospho-alpha-D-ribose 1-diphosphate: step 1/9. Its function is as follows. Catalyzes the condensation of ATP and 5-phosphoribose 1-diphosphate to form N'-(5'-phosphoribosyl)-ATP (PR-ATP). Has a crucial role in the pathway because the rate of histidine biosynthesis seems to be controlled primarily by regulation of HisG enzymatic activity. The chain is ATP phosphoribosyltransferase (hisG) from Rhizobium etli (strain ATCC 51251 / DSM 11541 / JCM 21823 / NBRC 15573 / CFN 42).